Here is a 670-residue protein sequence, read N- to C-terminus: DNA ligase (670 aa).

NAD(+) contacts are provided by residues 33–37, 82–83, and Glu-114; these read DAEYD and SL. The N6-AMP-lysine intermediate role is filled by Lys-116. Residues Arg-137, Glu-174, Lys-291, and Lys-315 each coordinate NAD(+). 4 residues coordinate Zn(2+): Cys-409, Cys-412, Cys-427, and Cys-433. One can recognise a BRCT domain in the interval 593–670; sequence GVELPLEGKT…TEQDLLNLMK (78 aa).

It belongs to the NAD-dependent DNA ligase family. LigA subfamily. Mg(2+) is required as a cofactor. It depends on Mn(2+) as a cofactor.

The catalysed reaction is NAD(+) + (deoxyribonucleotide)n-3'-hydroxyl + 5'-phospho-(deoxyribonucleotide)m = (deoxyribonucleotide)n+m + AMP + beta-nicotinamide D-nucleotide.. Functionally, DNA ligase that catalyzes the formation of phosphodiester linkages between 5'-phosphoryl and 3'-hydroxyl groups in double-stranded DNA using NAD as a coenzyme and as the energy source for the reaction. It is essential for DNA replication and repair of damaged DNA. This is DNA ligase from Vibrio campbellii (strain ATCC BAA-1116).